A 210-amino-acid polypeptide reads, in one-letter code: MKGKFIVIEGLEGAGKSTAVNTVQQFLRHFKIQDVICTREPGGTALSEEIRHLIKKKSQNEEILTDKAELLLLYAARVQLLENIIKPALSSGTWVIGDRHDLSSQAYQGGGRGIKSEFIKSLADFTLGSSFRPDLTLYLDLPPELGLQRARKRGHLDRIEQQSLVFFERIRARYLELTYDDPRIKMIDASKPIKKVTVDIQNALLSLLEK.

10 to 17 (GLEGAGKS) contacts ATP.

It belongs to the thymidylate kinase family.

The enzyme catalyses dTMP + ATP = dTDP + ADP. Functionally, phosphorylation of dTMP to form dTDP in both de novo and salvage pathways of dTTP synthesis. The polypeptide is Thymidylate kinase (Hamiltonella defensa subsp. Acyrthosiphon pisum (strain 5AT)).